Reading from the N-terminus, the 103-residue chain is Alpha-ketoglutarate dehydrogenase component 4 (103 aa).

Met1 carries the N-acetylmethionine modification. Lys5 is subject to N6-succinyllysine. The disordered stretch occupies residues 20-69 (TPLIRFPDRRDNPKPNVSEALRSAGLPSHSSVISQHSKGSKSPDLLMYQG). Positions 47 to 56 (SHSSVISQHS) are enriched in polar residues. Phosphoserine occurs at positions 49, 61, and 90.

It belongs to the alpha-ketoglutarate dehydrogenase component 4 family. Component of the 2-oxoglutarate dehydrogenase complex (OGDHC), composed of OGDH (2-oxoglutarate dehydrogenase; also called E1 subunit), DLST (dihydrolipoamide succinyltransferase; also called E2 subunit) and DLD (dihydrolipoamide dehydrogenase; also called E3 subunit), and the assembly factor KGD4. Within OGDHC complex, interacts (via N-terminus) with E3 subunit and (via C-terminus) with E2 subunit.

It is found in the mitochondrion. In terms of biological role, molecular adapter that is necessary to form a stable 2-oxoglutarate dehydrogenase enzyme complex (OGDHC). Enables the specific recruitment of E3 subunit to E2 subunit in the 2-oxoglutarate dehydrogenase complex (OGDHC). The sequence is that of Alpha-ketoglutarate dehydrogenase component 4 from Homo sapiens (Human).